Consider the following 183-residue polypeptide: Negative modulator of initiation of replication (183 aa).

The segment at 118–122 is interaction with DNA; it reads RTRIY.

It belongs to the SeqA family. Homodimer. Polymerizes to form helical filaments.

Its subcellular location is the cytoplasm. Functionally, negative regulator of replication initiation, which contributes to regulation of DNA replication and ensures that replication initiation occurs exactly once per chromosome per cell cycle. Binds to pairs of hemimethylated GATC sequences in the oriC region, thus preventing assembly of replication proteins and re-initiation at newly replicated origins. Repression is relieved when the region becomes fully methylated. The protein is Negative modulator of initiation of replication of Proteus mirabilis (strain HI4320).